The following is a 193-amino-acid chain: ATP synthase subunit b 2 (193 aa).

The chain crosses the membrane as a helical span at residues 44 to 64 (IFWLVLTLLAIYFVLTKIALP).

This sequence belongs to the ATPase B chain family. As to quaternary structure, F-type ATPases have 2 components, F(1) - the catalytic core - and F(0) - the membrane proton channel. F(1) has five subunits: alpha(3), beta(3), gamma(1), delta(1), epsilon(1). F(0) has three main subunits: a(1), b(2) and c(10-14). The alpha and beta chains form an alternating ring which encloses part of the gamma chain. F(1) is attached to F(0) by a central stalk formed by the gamma and epsilon chains, while a peripheral stalk is formed by the delta and b chains.

Its subcellular location is the cell inner membrane. F(1)F(0) ATP synthase produces ATP from ADP in the presence of a proton or sodium gradient. F-type ATPases consist of two structural domains, F(1) containing the extramembraneous catalytic core and F(0) containing the membrane proton channel, linked together by a central stalk and a peripheral stalk. During catalysis, ATP synthesis in the catalytic domain of F(1) is coupled via a rotary mechanism of the central stalk subunits to proton translocation. In terms of biological role, component of the F(0) channel, it forms part of the peripheral stalk, linking F(1) to F(0). The b'-subunit is a diverged and duplicated form of b found in plants and photosynthetic bacteria. This chain is ATP synthase subunit b 2 (atpF2), found in Jannaschia sp. (strain CCS1).